A 214-amino-acid polypeptide reads, in one-letter code: uncharacterized protein (214 aa).

This is an uncharacterized protein from Sinorhizobium fredii (strain NBRC 101917 / NGR234).